We begin with the raw amino-acid sequence, 949 residues long: Glycine dehydrogenase (decarboxylating) (949 aa).

Lys-700 carries the N6-(pyridoxal phosphate)lysine modification.

The protein belongs to the GcvP family. As to quaternary structure, the glycine cleavage system is composed of four proteins: P, T, L and H. Requires pyridoxal 5'-phosphate as cofactor.

It catalyses the reaction N(6)-[(R)-lipoyl]-L-lysyl-[glycine-cleavage complex H protein] + glycine + H(+) = N(6)-[(R)-S(8)-aminomethyldihydrolipoyl]-L-lysyl-[glycine-cleavage complex H protein] + CO2. Functionally, the glycine cleavage system catalyzes the degradation of glycine. The P protein binds the alpha-amino group of glycine through its pyridoxal phosphate cofactor; CO(2) is released and the remaining methylamine moiety is then transferred to the lipoamide cofactor of the H protein. This is Glycine dehydrogenase (decarboxylating) from Flavobacterium johnsoniae (strain ATCC 17061 / DSM 2064 / JCM 8514 / BCRC 14874 / CCUG 350202 / NBRC 14942 / NCIMB 11054 / UW101) (Cytophaga johnsonae).